Consider the following 413-residue polypeptide: Protein LAZY 1 (413 aa).

The helical transmembrane segment at 71–91 threads the bilayer; it reads FTFGGSGLLTIGTLGIAAVAV. Positions 103-124 are enriched in acidic residues; the sequence is DADADSDFDDNDDTAGDDEDQV. Disordered stretches follow at residues 103–127 and 261–308; these read DADA…VDSA and EDGG…ASAT. 2 short sequence motifs (nuclear localization signal) span residues 275–298 and 338–345; these read RKAG…EKVP and KKSRKRGS.

Belongs to the LAZY family. In terms of tissue distribution, expressed in the node of the stem, initiating leaf founder cells, young leaf primordia, tips of axillary meristems, spikelet pair meristems of developing tassels and ears, male flower primordia, tassels, ears, silks and seeds. Expressed in leaf sheaths, leaf pulvinus and shoot apical meristem (SAM).

It localises to the cell membrane. The protein localises to the nucleus. Functionally, involved in the regulation of shoot gravitropism, and tassel and ear development through the regulation of polar auxin transport (PAT) and auxin signaling. Acts as a negative regulator of basipetal PAT, but positive regulator of lateral auxin transport. Involved in the regulation of shoot gravitropism and leaf angle through the regulation of cell development. In Zea mays (Maize), this protein is Protein LAZY 1.